A 212-amino-acid chain; its full sequence is Pyridoxine/pyridoxamine 5'-phosphate oxidase (212 aa).

Residues 8 to 11 (RRSY) and Lys66 each bind substrate. FMN-binding positions include 61 to 66 (RIVLLK), 76 to 77 (FT), Arg82, Lys83, and Gln105. Residues Tyr123, Arg127, and Ser131 each contribute to the substrate site. FMN is bound by residues 140 to 141 (QS) and Trp184. Substrate is bound at residue 190–192 (RLH). FMN is bound at residue Arg194.

Belongs to the pyridoxamine 5'-phosphate oxidase family. Homodimer. FMN serves as cofactor.

It catalyses the reaction pyridoxamine 5'-phosphate + O2 + H2O = pyridoxal 5'-phosphate + H2O2 + NH4(+). The enzyme catalyses pyridoxine 5'-phosphate + O2 = pyridoxal 5'-phosphate + H2O2. Its pathway is cofactor metabolism; pyridoxal 5'-phosphate salvage; pyridoxal 5'-phosphate from pyridoxamine 5'-phosphate: step 1/1. It participates in cofactor metabolism; pyridoxal 5'-phosphate salvage; pyridoxal 5'-phosphate from pyridoxine 5'-phosphate: step 1/1. Its function is as follows. Catalyzes the oxidation of either pyridoxine 5'-phosphate (PNP) or pyridoxamine 5'-phosphate (PMP) into pyridoxal 5'-phosphate (PLP). The protein is Pyridoxine/pyridoxamine 5'-phosphate oxidase of Cupriavidus necator (strain ATCC 17699 / DSM 428 / KCTC 22496 / NCIMB 10442 / H16 / Stanier 337) (Ralstonia eutropha).